The sequence spans 145 residues: 3-hydroxyacyl-[acyl-carrier-protein] dehydratase FabZ (145 aa).

The active site involves histidine 48.

This sequence belongs to the thioester dehydratase family. FabZ subfamily.

The protein localises to the cytoplasm. It carries out the reaction a (3R)-hydroxyacyl-[ACP] = a (2E)-enoyl-[ACP] + H2O. Functionally, involved in unsaturated fatty acids biosynthesis. Catalyzes the dehydration of short chain beta-hydroxyacyl-ACPs and long chain saturated and unsaturated beta-hydroxyacyl-ACPs. This Geobacillus sp. (strain WCH70) protein is 3-hydroxyacyl-[acyl-carrier-protein] dehydratase FabZ.